Reading from the N-terminus, the 295-residue chain is N-acetylmuramic acid 6-phosphate etherase (295 aa).

The 164-residue stretch at 53–216 (TTEQFKQGGR…STITMVGVGK (164 aa)) folds into the SIS domain. Glu81 (proton donor) is an active-site residue. Glu112 is a catalytic residue.

Belongs to the GCKR-like family. MurNAc-6-P etherase subfamily. In terms of assembly, homodimer.

It carries out the reaction N-acetyl-D-muramate 6-phosphate + H2O = N-acetyl-D-glucosamine 6-phosphate + (R)-lactate. It functions in the pathway amino-sugar metabolism; N-acetylmuramate degradation. Functionally, specifically catalyzes the cleavage of the D-lactyl ether substituent of MurNAc 6-phosphate, producing GlcNAc 6-phosphate and D-lactate. This chain is N-acetylmuramic acid 6-phosphate etherase, found in Staphylococcus saprophyticus subsp. saprophyticus (strain ATCC 15305 / DSM 20229 / NCIMB 8711 / NCTC 7292 / S-41).